Reading from the N-terminus, the 158-residue chain is Superoxide dismutase [Cu-Zn] (158 aa).

Residues His-46, His-48, and His-63 each contribute to the Cu cation site. Residues Cys-57 and Cys-149 are joined by a disulfide bond. Residues His-63, His-71, His-80, and Asp-83 each coordinate Zn(2+). His-120 is a Cu cation binding site.

The protein belongs to the Cu-Zn superoxide dismutase family. As to quaternary structure, homodimer. It depends on Cu cation as a cofactor. Zn(2+) serves as cofactor.

The protein resides in the cytoplasm. The enzyme catalyses 2 superoxide + 2 H(+) = H2O2 + O2. Functionally, destroys radicals which are normally produced within the cells and which are toxic to biological systems. This is Superoxide dismutase [Cu-Zn] (SODC) from Brugia pahangi (Filarial nematode worm).